The chain runs to 77 residues: Dermatoxin-A1 (77 aa).

An N-terminal signal peptide occupies residues 1 to 22 (MAFLKKSLFLVLFLGLVPLFLC). A propeptide spanning residues 23 to 42 (ENEKREGENEKEENDDQSEE) is cleaved from the precursor. Gln-76 is modified (glutamine amide).

This sequence belongs to the frog skin active peptide (FSAP) family. Dermatoxin subfamily. In terms of tissue distribution, expressed by the skin glands.

The protein resides in the secreted. Its function is as follows. Possesses a potent antimicrobial activity against Gram-positive and Gram-negative bacteria. Probably acts by disturbing membrane functions with its amphipathic structure. The sequence is that of Dermatoxin-A1 from Agalychnis annae (Blue-sided leaf frog).